Consider the following 180-residue polypeptide: Large ribosomal subunit protein uL5 (180 aa).

It belongs to the universal ribosomal protein uL5 family. As to quaternary structure, part of the 50S ribosomal subunit; part of the 5S rRNA/L5/L18/L25 subcomplex. Contacts the 5S rRNA and the P site tRNA. Forms a bridge to the 30S subunit in the 70S ribosome.

Its function is as follows. This is one of the proteins that bind and probably mediate the attachment of the 5S RNA into the large ribosomal subunit, where it forms part of the central protuberance. In the 70S ribosome it contacts protein S13 of the 30S subunit (bridge B1b), connecting the 2 subunits; this bridge is implicated in subunit movement. Contacts the P site tRNA; the 5S rRNA and some of its associated proteins might help stabilize positioning of ribosome-bound tRNAs. The sequence is that of Large ribosomal subunit protein uL5 from Streptococcus pneumoniae (strain JJA).